The sequence spans 308 residues: ADP-L-glycero-D-manno-heptose-6-epimerase (308 aa).

Residues 10 to 11 (MI), 31 to 32 (DN), K38, K53, 75 to 79 (EGACS), and N92 each bind NADP(+). Y140 (proton acceptor) is an active-site residue. K144 contributes to the NADP(+) binding site. Residue N169 participates in substrate binding. 2 residues coordinate NADP(+): V170 and K178. The active-site Proton acceptor is the K178. Residues S180, H187, 201–204 (FEGS), R209, and Y272 contribute to the substrate site.

It belongs to the NAD(P)-dependent epimerase/dehydratase family. HldD subfamily. As to quaternary structure, homopentamer. NADP(+) is required as a cofactor.

It catalyses the reaction ADP-D-glycero-beta-D-manno-heptose = ADP-L-glycero-beta-D-manno-heptose. The protein operates within nucleotide-sugar biosynthesis; ADP-L-glycero-beta-D-manno-heptose biosynthesis; ADP-L-glycero-beta-D-manno-heptose from D-glycero-beta-D-manno-heptose 7-phosphate: step 4/4. Functionally, catalyzes the interconversion between ADP-D-glycero-beta-D-manno-heptose and ADP-L-glycero-beta-D-manno-heptose via an epimerization at carbon 6 of the heptose. This chain is ADP-L-glycero-D-manno-heptose-6-epimerase, found in Actinobacillus pleuropneumoniae serotype 7 (strain AP76).